A 357-amino-acid chain; its full sequence is Fulicin peptides (357 aa).

An N-terminal signal peptide occupies residues 1–17 (MQPTVLLILMTSCLTYQ). A propeptide spanning residues 18-119 (VIADKPKGNH…VDGSQGHLEP (102 aa)) is cleaved from the precursor. Residue Asn-123 is modified to D-asparagine. Val-126 is modified (valine amide). A propeptide spanning residues 130-194 (NTLPEEAGSF…YNTMNEDEAS (65 aa)) is cleaved from the precursor. Valine amide is present on residues Val-201 and Val-209. Leu-217 and Leu-226 each carry leucine amide. Ile-233 and Ile-242 each carry isoleucine amide. Valine amide occurs at positions 250 and 259. The propeptide occupies 263-298 (NQGVFTVSPSSTKISFDDNYLPYLSSVDAGDLSDVN). At Leu-305 the chain carries Leucine amide. A propeptide spanning residues 311-357 (TAEQDETSQRSNERLVALLQNTGFRKRLSRMLQNQRLVEHYPEFIGK) is cleaved from the precursor.

Found in central ganglia and the ventricles and atria of the heart.

Potentiates tetanic contraction of the penis retractor muscle at very low concentrations, and also shows modulatory actions on the activity of the buccal and ventricular muscles and the central ganglionic neurons. The sequence is that of Fulicin peptides from Lissachatina fulica (Giant African land snail).